The chain runs to 116 residues: Large ribosomal subunit protein bL19 (116 aa).

It belongs to the bacterial ribosomal protein bL19 family.

Functionally, this protein is located at the 30S-50S ribosomal subunit interface and may play a role in the structure and function of the aminoacyl-tRNA binding site. The protein is Large ribosomal subunit protein bL19 of Clostridioides difficile (strain 630) (Peptoclostridium difficile).